The primary structure comprises 79 residues: Neurotoxin BmK-M9 (79 aa).

Residues 1 to 14 form the signal peptide; the sequence is MISFALLLMTGVES. Residues 16-78 enclose the LCN-type CS-alpha/beta domain; sequence RDAYIAKPEN…VPIRVPGKCH (63 aa). Disulfide bonds link Cys26/Cys77, Cys30/Cys50, Cys36/Cys60, and Cys40/Cys62. Position 79 (Arg79) is a propeptide, removed by a carboxypeptidase.

It belongs to the long (4 C-C) scorpion toxin superfamily. Sodium channel inhibitor family. Alpha subfamily. As to expression, expressed by the venom gland.

It is found in the secreted. Functionally, binds to sodium channels (Nav) and inhibits the inactivation of the activated channels, thereby blocking neuronal transmission. This toxin is active against mammals. This chain is Neurotoxin BmK-M9, found in Olivierus martensii (Manchurian scorpion).